The chain runs to 269 residues: Glutamate racemase (269 aa).

Residues 11-12 and 43-44 each bind substrate; these read DS and YG. Cys-74 serves as the catalytic Proton donor/acceptor. 75-76 is a substrate binding site; that stretch reads NT. The active-site Proton donor/acceptor is Cys-185. 186 to 187 provides a ligand contact to substrate; sequence TH.

The protein belongs to the aspartate/glutamate racemases family.

The enzyme catalyses L-glutamate = D-glutamate. It participates in cell wall biogenesis; peptidoglycan biosynthesis. Its function is as follows. Provides the (R)-glutamate required for cell wall biosynthesis. This chain is Glutamate racemase, found in Bacillus cereus (strain G9842).